The following is a 101-amino-acid chain: Protein Tat (101 aa).

The interaction with human CREBBP stretch occupies residues 1-24 (MEPVDPNLEPWKHPGSQPRTACNN). Residues 1 to 48 (MEPVDPNLEPWKHPGSQPRTACNNCYCKKCCFHCQVCFTKKGLGISYG) are transactivation. The Zn(2+) site is built by C22, C25, and C27. The cysteine-rich stretch occupies residues 22–37 (CNNCYCKKCCFHCQVC). Position 28 is an N6-acetyllysine; by host PCAF (K28). Zn(2+) contacts are provided by C30, H33, C34, and C37. Positions 38 to 48 (FTKKGLGISYG) are core. The disordered stretch occupies residues 47-101 (YGRKKRRQRRRPPQDSQTHQSSLSKQPTSQLRGDPTGPTESKKKVERETETDPVH). Basic residues predominate over residues 48-57 (GRKKRRQRRR). A Nuclear localization signal, RNA-binding (TAR), and protein transduction motif is present at residues 49 to 57 (RKKRRQRRR). Residues 49–86 (RKKRRQRRRPPQDSQTHQSSLSKQPTSQLRGDPTGPTE) are interaction with the host capping enzyme RNGTT. 2 positions are modified to N6-acetyllysine; by host EP300 and GCN5L2: K50 and K51. Asymmetric dimethylarginine; by host PRMT6 is present on residues R52 and R53. Polar residues predominate over residues 61-77 (DSQTHQSSLSKQPTSQL). A Glycyl lysine isopeptide (Lys-Gly) (interchain with G-Cter in ubiquitin) cross-link involves residue K71. Positions 78–80 (RGD) match the Cell attachment site motif. Positions 86–101 (ESKKKVERETETDPVH) are enriched in basic and acidic residues.

Belongs to the lentiviruses Tat family. Interacts with host CCNT1. Associates with the P-TEFb complex composed at least of Tat, P-TEFb (CDK9 and CCNT1), TAR RNA, RNA Pol II. Recruits the HATs CREBBP, TAF1/TFIID, EP300, PCAF and GCN5L2. Interacts with host KAT5/Tip60; this interaction targets the latter to degradation. Interacts with the host deacetylase SIRT1. Interacts with host capping enzyme RNGTT; this interaction stimulates RNGTT. Binds to host KDR, and to the host integrins ITGAV/ITGB3 and ITGA5/ITGB1. Interacts with host KPNB1/importin beta-1 without previous binding to KPNA1/importin alpha-1. Interacts with EIF2AK2. Interacts with host nucleosome assembly protein NAP1L1; this interaction may be required for the transport of Tat within the nucleus, since the two proteins interact at the nuclear rim. Interacts with host C1QBP/SF2P32; this interaction involves lysine-acetylated Tat. Interacts with the host chemokine receptors CCR2, CCR3 and CXCR4. Interacts with host DPP4/CD26; this interaction may trigger an anti-proliferative effect. Interacts with host LDLR. Interacts with the host extracellular matrix metalloproteinase MMP1. Interacts with host PRMT6; this interaction mediates Tat's methylation. Interacts with, and is ubiquitinated by MDM2/Hdm2. Interacts with host PSMC3 and HTATIP2. Interacts with STAB1; this interaction may overcome SATB1-mediated repression of IL2 and IL2RA (interleukin) in T cells by binding to the same domain than HDAC1. Interacts (when acetylated) with human CDK13, thereby increasing HIV-1 mRNA splicing and promoting the production of the doubly spliced HIV-1 protein Nef. Interacts with host TBP; this interaction modulates the activity of transcriptional pre-initiation complex. Interacts with host RELA. Interacts with host PLSCR1; this interaction negatively regulates Tat transactivation activity by altering its subcellular distribution. Asymmetrical arginine methylation by host PRMT6 seems to diminish the transactivation capacity of Tat and affects the interaction with host CCNT1. Post-translationally, acetylation by EP300, CREBBP, GCN5L2/GCN5 and PCAF regulates the transactivation activity of Tat. EP300-mediated acetylation of Lys-50 promotes dissociation of Tat from the TAR RNA through the competitive binding to PCAF's bromodomain. In addition, the non-acetylated Tat's N-terminus can also interact with PCAF. PCAF-mediated acetylation of Lys-28 enhances Tat's binding to CCNT1. Lys-50 is deacetylated by SIRT1. In terms of processing, polyubiquitination by host MDM2 does not target Tat to degradation, but activates its transactivation function and fosters interaction with CCNT1 and TAR RNA. Phosphorylated by EIF2AK2 on serine and threonine residues adjacent to the basic region important for TAR RNA binding and function. Phosphorylation of Tat by EIF2AK2 is dependent on the prior activation of EIF2AK2 by dsRNA.

Its subcellular location is the host nucleus. The protein resides in the host nucleolus. It localises to the host cytoplasm. The protein localises to the secreted. Transcriptional activator that increases RNA Pol II processivity, thereby increasing the level of full-length viral transcripts. Recognizes a hairpin structure at the 5'-LTR of the nascent viral mRNAs referred to as the transactivation responsive RNA element (TAR) and recruits the cyclin T1-CDK9 complex (P-TEFb complex) that will in turn hyperphosphorylate the RNA polymerase II to allow efficient elongation. The CDK9 component of P-TEFb and other Tat-activated kinases hyperphosphorylate the C-terminus of RNA Pol II that becomes stabilized and much more processive. Other factors such as HTATSF1/Tat-SF1, SUPT5H/SPT5, and HTATIP2 are also important for Tat's function. Besides its effect on RNA Pol II processivity, Tat induces chromatin remodeling of proviral genes by recruiting the histone acetyltransferases (HATs) CREBBP, EP300 and PCAF to the chromatin. This also contributes to the increase in proviral transcription rate, especially when the provirus integrates in transcriptionally silent region of the host genome. To ensure maximal activation of the LTR, Tat mediates nuclear translocation of NF-kappa-B by interacting with host RELA. Through its interaction with host TBP, Tat may also modulate transcription initiation. Tat can reactivate a latently infected cell by penetrating in it and transactivating its LTR promoter. In the cytoplasm, Tat is thought to act as a translational activator of HIV-1 mRNAs. In terms of biological role, extracellular circulating Tat can be endocytosed by surrounding uninfected cells via the binding to several surface receptors such as CD26, CXCR4, heparan sulfate proteoglycans (HSPG) or LDLR. Neurons are rarely infected, but they internalize Tat via their LDLR. Through its interaction with nuclear HATs, Tat is potentially able to control the acetylation-dependent cellular gene expression. Modulates the expression of many cellular genes involved in cell survival, proliferation or in coding for cytokines or cytokine receptors. Tat plays a role in T-cell and neurons apoptosis. Tat induced neurotoxicity and apoptosis probably contribute to neuroAIDS. Circulating Tat also acts as a chemokine-like and/or growth factor-like molecule that binds to specific receptors on the surface of the cells, affecting many cellular pathways. In the vascular system, Tat binds to ITGAV/ITGB3 and ITGA5/ITGB1 integrins dimers at the surface of endothelial cells and competes with bFGF for heparin-binding sites, leading to an excess of soluble bFGF. The protein is Protein Tat of Human immunodeficiency virus type 1 group M subtype B (isolate YU-2) (HIV-1).